A 447-amino-acid chain; its full sequence is Trigger factor (447 aa).

The region spanning Gly-159–Pro-244 is the PPIase FKBP-type domain.

Belongs to the FKBP-type PPIase family. Tig subfamily.

It is found in the cytoplasm. It carries out the reaction [protein]-peptidylproline (omega=180) = [protein]-peptidylproline (omega=0). Functionally, involved in protein export. Acts as a chaperone by maintaining the newly synthesized protein in an open conformation. Functions as a peptidyl-prolyl cis-trans isomerase. This is Trigger factor from Dehalococcoides mccartyi (strain ATCC BAA-2100 / JCM 16839 / KCTC 5957 / BAV1).